We begin with the raw amino-acid sequence, 349 residues long: Hydroxymethylglutaryl-CoA synthase (349 aa).

(3S)-3-hydroxy-3-methylglutaryl-CoA-binding residues include aspartate 30 and alanine 31. The active-site Proton donor/acceptor is the glutamate 82. Residues cysteine 114 and threonine 155 each coordinate (3S)-3-hydroxy-3-methylglutaryl-CoA. Residue cysteine 114 is the Acyl-thioester intermediate of the active site. Position 203 (arginine 203) interacts with CoA. 2 residues coordinate (3S)-3-hydroxy-3-methylglutaryl-CoA: threonine 205 and histidine 238. Histidine 238 acts as the Proton donor/acceptor in catalysis. Lysine 243 lines the CoA pocket. (3S)-3-hydroxy-3-methylglutaryl-CoA contacts are provided by asparagine 270 and serine 300.

Belongs to the thiolase-like superfamily. Archaeal HMG-CoA synthase family. As to quaternary structure, interacts with acetoacetyl-CoA thiolase that catalyzes the precedent step in the pathway and with a DUF35 protein. The acetoacetyl-CoA thiolase/HMG-CoA synthase complex channels the intermediate via a fused CoA-binding site, which allows for efficient coupling of the endergonic thiolase reaction with the exergonic HMGCS reaction.

It carries out the reaction acetoacetyl-CoA + acetyl-CoA + H2O = (3S)-3-hydroxy-3-methylglutaryl-CoA + CoA + H(+). Its pathway is metabolic intermediate biosynthesis; (R)-mevalonate biosynthesis; (R)-mevalonate from acetyl-CoA: step 2/3. Catalyzes the condensation of acetyl-CoA with acetoacetyl-CoA to form 3-hydroxy-3-methylglutaryl-CoA (HMG-CoA). Functions in the mevalonate (MVA) pathway leading to isopentenyl diphosphate (IPP), a key precursor for the biosynthesis of isoprenoid compounds that are building blocks of archaeal membrane lipids. In Methanococcus maripaludis (strain C6 / ATCC BAA-1332), this protein is Hydroxymethylglutaryl-CoA synthase.